Reading from the N-terminus, the 492-residue chain is Ribose import ATP-binding protein RbsA (492 aa).

2 consecutive ABC transporter domains span residues isoleucine 3–serine 239 and alanine 249–glutamine 492. Glycine 35–serine 42 contributes to the ATP binding site.

It belongs to the ABC transporter superfamily. Ribose importer (TC 3.A.1.2.1) family. In terms of assembly, the complex is composed of an ATP-binding protein (RbsA), two transmembrane proteins (RbsC) and a solute-binding protein (RbsB).

The protein localises to the cell membrane. The catalysed reaction is D-ribose(out) + ATP + H2O = D-ribose(in) + ADP + phosphate + H(+). Part of the ABC transporter complex RbsABC involved in ribose import. Responsible for energy coupling to the transport system. This is Ribose import ATP-binding protein RbsA from Lactococcus lactis subsp. lactis (strain IL1403) (Streptococcus lactis).